The chain runs to 86 residues: Toxin Aam2 (86 aa).

Positions 1 to 20 (MNYLITISLALLLMTGVASG) are cleaved as a signal peptide. The LCN-type CS-alpha/beta domain occupies 22–84 (RDGYIADAGN…VPIKVPGKCN (63 aa)). 4 disulfide bridges follow: Cys32/Cys83, Cys36/Cys56, Cys42/Cys66, and Cys46/Cys68. Asn84 carries the post-translational modification Asparagine amide.

The protein belongs to the long (4 C-C) scorpion toxin superfamily. Sodium channel inhibitor family. Alpha subfamily. Expressed by the venom gland.

It is found in the secreted. In terms of biological role, alpha toxins bind voltage-independently at site-3 of sodium channels (Nav) and inhibit the inactivation of the activated channels, thereby blocking neuronal transmission. This chain is Toxin Aam2, found in Androctonus amoreuxi (African fattail scorpion).